The following is a 103-amino-acid chain: Large ribosomal subunit protein bL21 (103 aa).

The protein belongs to the bacterial ribosomal protein bL21 family. Part of the 50S ribosomal subunit. Contacts protein L20.

In terms of biological role, this protein binds to 23S rRNA in the presence of protein L20. This is Large ribosomal subunit protein bL21 from Methylibium petroleiphilum (strain ATCC BAA-1232 / LMG 22953 / PM1).